The following is a 437-amino-acid chain: MRNTELVQWFRQSTPYVNMHREKTFVIMLDGNAIAHPNFINITNDISLLHSLGIKLVIVFGARCQIDELLAKNQMSSTYHKHIRITDSKTLEVVKQAVGGLHYDIFSRLSLRLPNSPVLNVVSSNAVLAQPLGVIDGVDYGLSGKIRRINIEGIQQQLAQDAIVVIGPIAPSVTGEMFNLPFEEIATQIAIKLKADKLIGFCDQQGILDSEGNVLSDLHPREAKRYLTQFIESGQYHHSAARFLQASIEVCHAGIKRSHLLSYKEDGSLLQELFSRDGIGTQLSEESSENIRLATSFDIPGLLNLIRPLEEQGILVKRSREQLEMEISNYTIIERDGIVIACAALNHYPEEKMAEMACVAVHPDYRDSSRGDVLLEAIKRRAYKLQVEKLFVLTTRTTQWFQERGFVLSTTDDLPKEKREHYNYQRMSKILILELSQ.

The region spanning 289-429 (ENIRLATSFD…EHYNYQRMSK (141 aa)) is the N-acetyltransferase domain.

Belongs to the acetyltransferase family. ArgA subfamily.

Its subcellular location is the cytoplasm. It catalyses the reaction L-glutamate + acetyl-CoA = N-acetyl-L-glutamate + CoA + H(+). Its pathway is amino-acid biosynthesis; L-arginine biosynthesis; N(2)-acetyl-L-ornithine from L-glutamate: step 1/4. In Actinobacillus pleuropneumoniae serotype 3 (strain JL03), this protein is Amino-acid acetyltransferase.